The following is a 2027-amino-acid chain: MRAAWLIKMTCAYYAAISETKVKKRHVDPFMEWTQIITKYLWEQLQKMAEYYRPGPAGSGGCGSTIGPLPHDVEVAIRQWDYTEKLAMFMFQDGMLDRHEFLTWVLECFEKIRPGEDELLKLLLPLLLRYSGEFVQSAYLSRRLAYFCTRRLALQLDGVSSHSSHVISAQSTSTLPTTPAPQPPTSSTPSTPFSDLLMCPQHRPLVFGLSCILQTILLCCPSALVWHYSLTDSRIKTGSPLDHLPIAPSNLPMPEGNSAFTQQVRAKLREIEQQIKERGQAVEVRWSFDKCQEATAGFTIGRVLHTLEVLDSHSFERSDFSNSLDSLCNRIFGLGPSKDGHEISSDDDAVVSLLCEWAVSCKRSGRHRAMVVAKLLEKRQAEIEAERCGESEAADEKGSIASGSLSAPSAPIFQDVLLQFLDTQAPMLTDPRSENERVEFFNLVLLFCELIRHDVFSHNMYTCTLISRGDLAFGAPGPRPPSPFDDPADDAEHKEAEGSSSSKLEDPGLSESMDIDPSSSVLFEDMEKPDFSLFSPTMPCEGKGSPSPEKPDVEKEVKPPPKEKIEGTLGILYDQPRHVQYATHFPIPQEESCSHECNQRLVVLFGVGKQRDDARHAIKKITKDILKVLNRKGTAETDQLAPIVPLNPGDLTFLGGEDGQKRRRNRPEAFPTAEDIFAKFQHLSHYDQHQVTAQVSRNVLEQITSFALGMSYHLPLVQHVQFIFDLMEYSLSISGLIDFAIQLLNELSVVEAELLLKSSDLVGSYTTSLCLCIVAVLRHYHACLILNQDQMAQVFEGLCGVVKHGMNRSDGSSAERCILAYLYDLYTSCSHLKNKFGELFSDFCSKVKNTIYCNVEPSESNMRWAPEFMIDTLENPAAHTFTYTGLGKSLSENPANRYSFVCNALMHVCVGHHDPDRVNDIAILCAELTGYCKSLSAEWLGVLKALCCSSNNGTCGFNDLLCNVDVSDLSFHDSLATFVAILIARQCLLLEDLIRCAAIPSLLNAACSEQDSEPGARLTCRILLHLFKTPQLNPCQSDGNKPTVGIRSSCDRHLLAASQNRIVDGAVFAVLKAVFVLGDAELKGSGFTVTGGTEELPEEEGGGGSGGRRQGGRNISVETASLDVYAKYVLRSICQQEWVGERCLKSLCEDSNDLQDPVLSSAQAQRLMQLICYPHRLLDNEDGENPQRQRIKRILQNLDQWTMRQSSLELQLMIKQTPNNEMNSLLENIAKATIEVFQQSAETGSSSGSTASNMPSSSKTKPVLSSLERSGVWLVAPLIAKLPTSVQGHVLKAAGEELEKGQHLGSSSRKERDRQKQKSMSLLSQQPFLSLVLTCLKGQDEQREGLLTSLYSQVHQIVNNWRDDQYLDDCKPKQLMHEALKLRLNLVGGMFDTVQRSTQQTTEWAMLLLEIIISGTVDMQSNNELFTTVLDMLSVLINGTLAADMSSISQGSMEENKRAYMNLAKKLQKELGERQSDSLEKVRQLLPLPKQTRDVITCEPQGSLIDTKGNKIAGFDSIFKKEGLQVSTKQKISPWDLFEGLKPSAPLSWGWFGTVRVDRRVARGEEQQRLLLYHTHLRPRPRAYYLEPLPLPPEDEEPPAPTLLEPEKKAPEPPKTDKPGAAPPSTEERKKKSTKGKKRSQPATKTEDYGMGPGRSGPYGVTVPPDLLHHPNPGSITHLNYRQGSIGLYTQNQPLPAGGPRVDPYRPVRLPMQKLPTRPTYPGVLPTTMTGVMGLEPSSYKTSVYRQQQPAVPQGQRLRQQLQAKIQSQGMLGQSSVHQMTPSSSYGLQTSQGYTPYVSHVGLQQHTGPAGTMVPPSYSSQPYQSTHPSTNPTLVDPTRHLQQRPSGYVHQQAPTYGHGLTSTQRFSHQTLQQTPMISTMTPMSAQGVQAGVRSTAILPEQQQQQQQQQQQQQQQQQQQQQQQQQQYHIRQQQQQQILRQQQQQQQQQQQQQQQQQQQQQQQQQQHQQQQQQQAAPPQPQPQSQPQFQRQGLQQTQQQQQTAALVRQLQQQLSNTQPQPSTNIFGRY.

A Phosphotyrosine modification is found at Tyr13. Disordered stretches follow at residues 170–191 (QSTSTLPTTPAPQPPTSSTPST), 474–516 (GAPG…MDID), 538–563 (MPCEGKGSPSPEKPDVEKEVKPPPKE), and 1088–1113 (TVTGGTEELPEEEGGGGSGGRRQGGR). Phosphoserine is present on residues Ser482, Ser512, Ser545, and Ser547. The segment covering 549 to 563 (EKPDVEKEVKPPPKE) has biased composition (basic and acidic residues). Phosphoserine is present on residues Ser1105 and Ser1116. A compositionally biased stretch (low complexity) spans 1241–1258 (AETGSSSGSTASNMPSSS). Disordered stretches follow at residues 1241–1262 (AETGSSSGSTASNMPSSSKTKP), 1297–1321 (ELEKGQHLGSSSRKERDRQKQKSMS), and 1585–1676 (YLEP…PGSI). Composition is skewed to basic and acidic residues over residues 1297-1316 (ELEKGQHLGSSSRKERDRQK) and 1605-1618 (EPEKKAPEPPKTDK). Residues 1463 to 1901 (LAKKLQKELG…VRSTAILPEQ (439 aa)) form an interaction with CTNNB1 and GLI3 region. The span at 1631–1640 (KKSTKGKKRS) shows a compositional bias: basic residues. Lys1645 bears the N6-acetyllysine mark. Position 1746 is an asymmetric dimethylarginine; alternate (Arg1746). Arg1746 bears the Omega-N-methylarginine; alternate mark. Residue Arg1757 is modified to Omega-N-methylarginine. A disordered region spans residues 1805–1848 (QHTGPAGTMVPPSYSSQPYQSTHPSTNPTLVDPTRHLQQRPSGY). A compositionally biased stretch (low complexity) spans 1815 to 1830 (PPSYSSQPYQSTHPST). An asymmetric dimethylarginine mark is found at Arg1844 and Arg1865. Composition is skewed to low complexity over residues 1965–1975 (QHQQQQQQQAA), 1983–1999 (SQPQFQRQGLQQTQQQQ), and 2008–2021 (LQQQLSNTQPQPST). 2 disordered regions span residues 1965–1999 (QHQQQQQQQAAPPQPQPQSQPQFQRQGLQQTQQQQ) and 2008–2027 (LQQQLSNTQPQPSTNIFGRY).

Belongs to the Mediator complex subunit 12 family. In terms of assembly, component of the Mediator complex, which is composed of MED1, MED4, MED6, MED7, MED8, MED9, MED10, MED11, MED12, MED13, MED13L, MED14, MED15, MED16, MED17, MED18, MED19, MED20, MED21, MED22, MED23, MED24, MED25, MED26, MED27, MED29, MED30, MED31, CCNC, CDK8 and CDC2L6/CDK11. The MED12, MED13, CCNC and CDK8 subunits form a distinct module termed the CDK8 module. Mediator containing the CDK8 module is less active than Mediator lacking this module in supporting transcriptional activation. Individual preparations of the Mediator complex lacking one or more distinct subunits have been variously termed ARC, CRSP, DRIP, PC2, SMCC and TRAP. Also interacts with CTNNB1 and GLI3.

Its subcellular location is the nucleus. Component of the Mediator complex, a coactivator involved in the regulated transcription of nearly all RNA polymerase II-dependent genes. Mediator functions as a bridge to convey information from gene-specific regulatory proteins to the basal RNA polymerase II transcription machinery. Mediator is recruited to promoters by direct interactions with regulatory proteins and serves as a scaffold for the assembly of a functional preinitiation complex with RNA polymerase II and the general transcription factors. This subunit may specifically regulate transcription of targets of the Wnt signaling pathway and SHH signaling pathway. This chain is Mediator of RNA polymerase II transcription subunit 12 (MED12), found in Pan troglodytes (Chimpanzee).